Reading from the N-terminus, the 419-residue chain is Serine--tRNA ligase (419 aa).

Position 226 to 228 (226 to 228) interacts with L-serine; it reads TSE. ATP is bound by residues 257 to 259 and Val273; that span reads RRE. An L-serine-binding site is contributed by Glu280. 344-347 is a binding site for ATP; sequence ELTS. Thr379 lines the L-serine pocket.

It belongs to the class-II aminoacyl-tRNA synthetase family. Type-1 seryl-tRNA synthetase subfamily. As to quaternary structure, homodimer. The tRNA molecule binds across the dimer.

It is found in the cytoplasm. It catalyses the reaction tRNA(Ser) + L-serine + ATP = L-seryl-tRNA(Ser) + AMP + diphosphate + H(+). The catalysed reaction is tRNA(Sec) + L-serine + ATP = L-seryl-tRNA(Sec) + AMP + diphosphate + H(+). It functions in the pathway aminoacyl-tRNA biosynthesis; selenocysteinyl-tRNA(Sec) biosynthesis; L-seryl-tRNA(Sec) from L-serine and tRNA(Sec): step 1/1. Its function is as follows. Catalyzes the attachment of serine to tRNA(Ser). Is also able to aminoacylate tRNA(Sec) with serine, to form the misacylated tRNA L-seryl-tRNA(Sec), which will be further converted into selenocysteinyl-tRNA(Sec). This is Serine--tRNA ligase from Mycobacterium tuberculosis (strain CDC 1551 / Oshkosh).